We begin with the raw amino-acid sequence, 209 residues long: MSEDLPILSPIEARVLGCLIEKKELTPDVYPLTLNAALAAANQKTARDPVMALEQTEVHRALKLLEQKGLVRQMFGSRVERYEHQMAQRFSLTTPQTALIGLLLLRGPQTAHELLARAERMARFSSIEDLRGELDMLIGRRPPLVQEIPRGPGQREDRYVHLLAGPVDVAALSAQRSAPAMPHSDLEARLEALEQEVAALRARLDALGG.

The protein belongs to the UPF0502 family.

This is UPF0502 protein mll4256 from Mesorhizobium japonicum (strain LMG 29417 / CECT 9101 / MAFF 303099) (Mesorhizobium loti (strain MAFF 303099)).